Consider the following 120-residue polypeptide: uncharacterized protein (120 aa).

A Nudix hydrolase domain is found at 29-120 (QRQAAVLVPI…QVTPVVGIIP (92 aa)). Positions 67 to 89 (GAVDNSDATLIAAALREAQEEVA) match the Nudix box motif. Residues Glu-83 and Glu-87 each contribute to the Mg(2+) site.

Belongs to the Nudix hydrolase family. PCD1 subfamily. The cofactor is Mn(2+). Mg(2+) serves as cofactor.

Its function is as follows. Probably mediates the hydrolysis of some nucleoside diphosphate derivatives. This is an uncharacterized protein from Klebsiella aerogenes (Enterobacter aerogenes).